Here is a 283-residue protein sequence, read N- to C-terminus: ATP synthase gamma chain (283 aa).

The protein belongs to the ATPase gamma chain family. F-type ATPases have 2 components, CF(1) - the catalytic core - and CF(0) - the membrane proton channel. CF(1) has five subunits: alpha(3), beta(3), gamma(1), delta(1), epsilon(1). CF(0) has three main subunits: a, b and c.

It localises to the cell inner membrane. In terms of biological role, produces ATP from ADP in the presence of a proton gradient across the membrane. The gamma chain is believed to be important in regulating ATPase activity and the flow of protons through the CF(0) complex. The chain is ATP synthase gamma chain from Ehrlichia ruminantium (strain Welgevonden).